The chain runs to 243 residues: Ribonuclease 3 (243 aa).

One can recognise an RNase III domain in the interval 10-146 (VNRFRKRFDT…FIGALYLDQG (137 aa)). Mg(2+) is bound at residue Glu-59. Residue Asp-63 is part of the active site. Residues Asp-132 and Glu-135 each coordinate Mg(2+). Glu-135 is a catalytic residue. The 70-residue stretch at 172-241 (DFKTQFQEYV…AKSAYKQLKQ (70 aa)) folds into the DRBM domain. Over residues 219 to 231 (GKGKTKKESEQRA) the composition is skewed to basic and acidic residues. The segment at 219 to 243 (GKGKTKKESEQRAAKSAYKQLKQIK) is disordered.

The protein belongs to the ribonuclease III family. In terms of assembly, homodimer. Requires Mg(2+) as cofactor.

It localises to the cytoplasm. It catalyses the reaction Endonucleolytic cleavage to 5'-phosphomonoester.. Digests double-stranded RNA. Involved in the processing of primary rRNA transcript to yield the immediate precursors to the large and small rRNAs (23S and 16S). Processes some mRNAs, and tRNAs when they are encoded in the rRNA operon. Processes pre-crRNA and tracrRNA of type II CRISPR loci if present in the organism. The sequence is that of Ribonuclease 3 from Staphylococcus aureus (strain Mu3 / ATCC 700698).